Reading from the N-terminus, the 258-residue chain is Na(+)-translocating NADH-quinone reductase subunit C (258 aa).

Residues 14-34 traverse the membrane as a helical segment; it reads LIVVLAVSLICSVIVAGAVVG. Ser-226 bears the FMN phosphoryl serine mark.

This sequence belongs to the NqrC family. As to quaternary structure, composed of six subunits; NqrA, NqrB, NqrC, NqrD, NqrE and NqrF. FMN is required as a cofactor.

The protein localises to the cell inner membrane. It carries out the reaction a ubiquinone + n Na(+)(in) + NADH + H(+) = a ubiquinol + n Na(+)(out) + NAD(+). Functionally, NQR complex catalyzes the reduction of ubiquinone-1 to ubiquinol by two successive reactions, coupled with the transport of Na(+) ions from the cytoplasm to the periplasm. NqrA to NqrE are probably involved in the second step, the conversion of ubisemiquinone to ubiquinol. The chain is Na(+)-translocating NADH-quinone reductase subunit C from Neisseria meningitidis serogroup A / serotype 4A (strain DSM 15465 / Z2491).